The following is a 622-amino-acid chain: Lamin Dm0 (622 aa).

A disordered region spans residues 1–50 (MSSKSRRAGTATPQPGNTSTPRPPSAGPQPPPPSTHSQTASSPLSPTRHS). S2 is modified (N-acetylserine). A head region spans residues 2–56 (SSKSRRAGTATPQPGNTSTPRPPSAGPQPPPPSTHSQTASSPLSPTRHSRVAEKV). T10, T12, and T20 each carry phosphothreonine. Positions 21–34 (PRPPSAGPQPPPPS) are enriched in pro residues. Residues S25 and S34 each carry the phosphoserine modification. Residue T39 is modified to Phosphothreonine. 3 positions are modified to phosphoserine: S41, S42, and S45. Phosphothreonine is present on T47. Positions 54–410 (EKVELQNLND…KLLVGEEARL (357 aa)) constitute an IF rod domain. The tract at residues 55 to 91 (KVELQNLNDRLATYIDRVRNLETENSRLTIEVQTTRD) is coil 1A. The linker 1 stretch occupies residues 92–103 (TVTRETTNIKNI). Residues 104–241 (FEAELLETRR…QIHSQEINES (138 aa)) form a coil 1B region. S235 bears the Phosphoserine mark. The segment at 242–265 (RRIKQTEYSEIDGRLSSEYDAKLK) is linker 2. Position 249 is a phosphotyrosine (Y249). Residues S250 and S311 each carry the phosphoserine modification. Positions 266–408 (QSLQELRAQY…YDKLLVGEEA (143 aa)) are coil 2. Residues 409 to 619 (RLNITPATNT…GDPQQSNEKC (211 aa)) are tail. A phosphothreonine mark is found at T413 and T435. Residues 429-440 (RNSTRATPSRRT) show a composition bias toward polar residues. Positions 429 to 448 (RNSTRATPSRRTPSAAVKRK) are disordered. A Phosphoserine modification is found at S442. Positions 446–451 (KRKRAV) match the Nuclear localization signal motif. 2 positions are modified to phosphoserine: S455 and S459. Residues 461–588 (ADYYVSASAK…RIVSQHTSSS (128 aa)) form the LTD domain. The residue at position 595 (S595) is a Phosphoserine. The residue at position 597 (T597) is a Phosphothreonine. The disordered stretch occupies residues 603-622 (EQLYHQQGDPQQSNEKCAIM). The segment covering 605–622 (LYHQQGDPQQSNEKCAIM) has biased composition (polar residues). S615 carries the phosphoserine modification. At C619 the chain carries Cysteine methyl ester. C619 carries the S-farnesyl cysteine lipid modification. Residues 620-622 (AIM) constitute a propeptide, removed in mature form.

It belongs to the intermediate filament family. In terms of assembly, interacts directly with LBR. Interacts with MAN1. Interacts with Ote. Post-translationally, three forms of lamin have been identified in D.melanogaster, lamin Dm0 is rapidly processed to lamin Dm1 in the cytoplasm, Dm1 is then assembled in the nuclear envelope and is then phosphorylated, forming lamin Dm2. In terms of tissue distribution, constitutively expressed in all tissues (at protein level). Expressed in spermatocytes (at protein level).

The protein localises to the nucleus. It is found in the nucleus inner membrane. It localises to the nucleus envelope. The protein resides in the nucleus lamina. Its subcellular location is the cytoplasm. The protein localises to the cytoskeleton. It is found in the spindle pole. Functionally, lamins are components of the nuclear lamina, a fibrous layer on the nucleoplasmic side of the inner nuclear membrane, which is thought to provide a framework for the nuclear envelope and may also interact with chromatin. May have a role in the localization of the LEM domain proteins Ote, bocks and MAN1 to the nuclear membrane. In spermatocytes, plays a role in maintaining type-A lamin LamC nuclear localization; regulates meiotic cytokinesis by maintaining the structure of the spindle envelope, and by contributing to the formation of the contractile ring and central spindle. Required for nuclear migration and to link the microtubule organizing center (MTOC) to the nucleus. In addition, is required for nuclear envelope localization of klar. This is Lamin Dm0 from Drosophila melanogaster (Fruit fly).